The chain runs to 227 residues: ATP synthase F(0) complex subunit a (227 aa).

Transmembrane regions (helical) follow at residues 14-34, 69-89, 99-119, 137-157, 180-200, and 202-222; these read LLGI…FPTP, WATI…LGLL, LSLN…IGML, LLIP…PLAL, FVLI…LFLL, and ILEV…LSLY.

The protein belongs to the ATPase A chain family. As to quaternary structure, component of the ATP synthase complex composed at least of ATP5F1A/subunit alpha, ATP5F1B/subunit beta, ATP5MC1/subunit c (homooctomer), MT-ATP6/subunit a, MT-ATP8/subunit 8, ATP5ME/subunit e, ATP5MF/subunit f, ATP5MG/subunit g, ATP5MK/subunit k, ATP5MJ/subunit j, ATP5F1C/subunit gamma, ATP5F1D/subunit delta, ATP5F1E/subunit epsilon, ATP5PF/subunit F6, ATP5PB/subunit b, ATP5PD/subunit d, ATP5PO/subunit OSCP. ATP synthase complex consists of a soluble F(1) head domain (subunits alpha(3) and beta(3)) - the catalytic core - and a membrane F(0) domain - the membrane proton channel (subunits c, a, 8, e, f, g, k and j). These two domains are linked by a central stalk (subunits gamma, delta, and epsilon) rotating inside the F1 region and a stationary peripheral stalk (subunits F6, b, d, and OSCP). Interacts with DNAJC30; interaction is direct.

The protein localises to the mitochondrion inner membrane. The catalysed reaction is H(+)(in) = H(+)(out). Subunit a, of the mitochondrial membrane ATP synthase complex (F(1)F(0) ATP synthase or Complex V) that produces ATP from ADP in the presence of a proton gradient across the membrane which is generated by electron transport complexes of the respiratory chain. ATP synthase complex consist of a soluble F(1) head domain - the catalytic core - and a membrane F(1) domain - the membrane proton channel. These two domains are linked by a central stalk rotating inside the F(1) region and a stationary peripheral stalk. During catalysis, ATP synthesis in the catalytic domain of F(1) is coupled via a rotary mechanism of the central stalk subunits to proton translocation. With the subunit c (ATP5MC1), forms the proton-conducting channel in the F(0) domain, that contains two crucial half-channels (inlet and outlet) that facilitate proton movement from the mitochondrial intermembrane space (IMS) into the matrix. Protons are taken up via the inlet half-channel and released through the outlet half-channel, following a Grotthuss mechanism. The protein is ATP synthase F(0) complex subunit a of Squalus acanthias (Spiny dogfish).